We begin with the raw amino-acid sequence, 407 residues long: Subtilisin-like protease CPC735_013710 (407 aa).

The first 17 residues, 1–17, serve as a signal peptide directing secretion; the sequence is MQLLNLSLFFLLPFATA. Positions 18–115 are excised as a propeptide; that stretch reads NPIPQDSQNI…VLPDQKIYLA (98 aa). The 84-residue stretch at 31 to 114 folds into the Inhibitor I9 domain; the sequence is QYIVTLKDGL…SVLPDQKIYL (84 aa). Positions 124–407 constitute a Peptidase S8 domain; it reads GWNLGYMSSK…VAYNGIQEML (284 aa). N-linked (GlcNAc...) asparagine glycosylation occurs at Asn145. Catalysis depends on charge relay system residues Asp162 and His194. N-linked (GlcNAc...) asparagine glycans are attached at residues Asn241, Asn254, and Asn341. The active-site Charge relay system is the Ser350. N-linked (GlcNAc...) asparagine glycosylation is present at Asn381.

The protein belongs to the peptidase S8 family.

It is found in the secreted. In terms of biological role, secreted subtilisin-like serine protease with keratinolytic activity that contributes to pathogenicity. The sequence is that of Subtilisin-like protease CPC735_013710 from Coccidioides posadasii (strain C735) (Valley fever fungus).